Reading from the N-terminus, the 676-residue chain is Envelope glycoprotein (676 aa).

Positions 1 to 32 (MEGLSLLQLPRDKFRKSSFFVWVIILFQKAFS) are cleaved as a signal peptide. The Extracellular portion of the chain corresponds to 33-650 (MPLGVVTNST…DDNWWTGWRQ (618 aa)). An N-linked (GlcNAc...) asparagine; by host glycan is attached at N40. 5 disulfides stabilise this stretch: C53/C609, C108/C135, C121/C147, C511/C556, and C601/C608. A receptor-binding region spans residues 54–201 (KDHLASTDQL…TFLQSPPIRE (148 aa)). N-linked (GlcNAc...) asparagine; by host glycans are attached at residues N204, N208, N238, N257, N268, N296, and N314. The mucin-like region stretch occupies residues 305 to 485 (ELSFETLSLN…STSNGLITST (181 aa)). The tract at residues 313-351 (LNETEDDDATSSRTTKGRISDRATRKYSDLVPKDSPGMV) is disordered. Residues 330–344 (RISDRATRKYSDLVP) are compositionally biased toward basic and acidic residues. Residue N366 is glycosylated (N-linked (GlcNAc...) asparagine; by host). Residues 406 to 458 (SSSQILSSSPTMAPSPETQTSTTYTPKLPVMTTEESTTPPRNSPGSTTEAPTL) are disordered. Polar residues-rich tracts occupy residues 415-430 (PTMA…TTYT) and 438-458 (TEES…APTL). N463 is a glycosylation site (N-linked (GlcNAc...) asparagine; by host). Residues 524–539 (HNAAGIAWIPYFGPGA) are fusion peptide. Residues 554 to 595 (LVCGLRQLANETTQALQLFLRATTELRTYTILNRKAIDFLLR) are a coiled coil. A glycan (N-linked (GlcNAc...) asparagine; by host) is linked at N563. Residues 615–634 (WTKNITDKINQIIHDFIDNP) adopt a coiled-coil conformation. N618 carries N-linked (GlcNAc...) asparagine; by host glycosylation. The helical transmembrane segment at 651–671 (WIPAGIGITGIIIAIIALLCV) threads the bilayer. Residues C670 and C672 are each lipidated (S-palmitoyl cysteine; by host). The Cytoplasmic segment spans residues 672–676 (CKLLC).

The protein belongs to the filoviruses glycoprotein family. Homotrimer; each monomer consists of a GP1 and a GP2 subunit linked by disulfide bonds. The resulting peplomers (GP1,2) protrude from the virus surface as spikes. Interacts with host integrin alpha-V/ITGAV. Interacts with host CLEC10A. Binds also to host CD209 and CLEC4M/DC-SIGN(R). Interacts with host FOLR1. Interacts with BST2; this interaction inhibits the antiviral effect of BST2 and this allows viral release from infected cells. Interacts with host FCN1; this interaction enhances viral entry. Interacts with host TLR4; this interaction induces cell death in T-lymphocytes or proinflammatory cytokines and SOCS1 production in monocytes. In terms of assembly, interacts with host entry receptor NPC1. As to quaternary structure, GP1 and GP2delta are part of GP1,2delta soluble complexes released by ectodomain shedding. The signal peptide region modulates GP's high mannose glycosylation, thereby determining the efficiency of the interactions with DC-SIGN(R). In terms of processing, N-glycosylated. Post-translationally, O-glycosylated in the mucin-like region. Palmitoylation of GP2 is not required for its function. In terms of processing, specific enzymatic cleavages in vivo yield mature proteins. The precursor is processed into GP1 and GP2 by host cell furin in the trans Golgi, and maybe by other host proteases, to yield the mature GP1 and GP2 proteins. The cleavage site corresponds to the furin optimal cleavage sequence [KR]-X-[KR]-R. This cleavage does not seem to be required for function. After the internalization of the virus into cell endosomes, GP1 C-terminus is removed by the endosomal proteases cathepsin B, cathepsin L, or both, leaving a 19-kDa N-terminal fragment which is further digested by cathepsin B. Proteolytic processing of GP1,2 by host ADAM17 can remove the transmembrane anchor of GP2 and leads to shedding of complexes consisting in GP1 and truncated GP2 (GP1,2delta).

It localises to the virion membrane. Its subcellular location is the host cell membrane. The protein resides in the secreted. In terms of biological role, trimeric GP1,2 complexes form the virion surface spikes and mediate the viral entry processes, with GP1 acting as the receptor-binding subunit and GP2 as the membrane fusion subunit. At later times of infection, down-regulates the expression of various host cell surface molecules that are essential for immune surveillance and cell adhesion. Down-modulates several integrins including ITGA1, ITGA2, ITGA3, ITGA4, ITGA5, ITGA6, ITGAV and ITGB1. This decrease in cell adhesion molecules may lead to cell detachment, contributing to the disruption of blood vessel integrity and hemorrhages developed during infection (cytotoxicity). Interacts with host TLR4 and thereby stimulates the differentiation and activation of monocytes leading to bystander death of T-lymphocytes. Down-regulates as well the function of host natural killer cells. Counteracts the antiviral effect of host BST2/tetherin that restricts release of progeny virions from infected cells. However, cooperates with VP40 and host BST2 to activate canonical NF-kappa-B pathway in a manner dependent on neddylation. Functionally, functions as a decoy for anti-GP1,2 antibodies thereby contributing to viral immune evasion. Interacts and activates host macrophages and dendritic cells inducing up-regulation of cytokine transcription. This effect is mediated throught activation of host TLR4. Its function is as follows. Responsible for binding to the receptor(s) on target cells. Interacts with CD209/DC-SIGN and CLEC4M/DC-SIGNR which act as cofactors for virus entry into dendritic cells (DCs) and endothelial cells. Binding to the macrophage specific lectin CLEC10A also seem to enhance virus infectivity. Interaction with FOLR1/folate receptor alpha may be a cofactor for virus entry in some cell types, although results are contradictory. Members of the Tyro3 receptor tyrosine kinase family also seem to be cell entry factors in filovirus infection. Once attached, the virions are internalized through clathrin-dependent endocytosis and/or macropinocytosis. After internalization of the virus into the endosomes of the host cell, proteolysis of GP1 by two cysteine proteases, CTSB/cathepsin B and CTSL/cathepsin L removes the glycan cap and allows GP1 binding to the host entry receptor NPC1. NPC1-binding, Ca(2+) and acidic pH induce a conformational change of GP2, which unmasks its fusion peptide and permit membranes fusion. Acts as a class I viral fusion protein. Under the current model, the protein has at least 3 conformational states: pre-fusion native state, pre-hairpin intermediate state, and post-fusion hairpin state. During viral and target cell membrane fusion, the coiled coil regions (heptad repeats) assume a trimer-of-hairpins structure, positioning the fusion peptide in close proximity to the C-terminal region of the ectodomain. The formation of this structure appears to drive apposition and subsequent fusion of viral and target cell membranes. Responsible for penetration of the virus into the cell cytoplasm by mediating the fusion of the membrane of the endocytosed virus particle with the endosomal membrane. Low pH in endosomes induces an irreversible conformational change in GP2, releasing the fusion hydrophobic peptide. The protein is Envelope glycoprotein (GP) of Epomops franqueti (Franquet's epauletted fruit bat).